The sequence spans 285 residues: Bifunctional protein FolD (285 aa).

Residues 166–168 (GAS) and Ile232 each bind NADP(+).

Belongs to the tetrahydrofolate dehydrogenase/cyclohydrolase family. Homodimer.

The catalysed reaction is (6R)-5,10-methylene-5,6,7,8-tetrahydrofolate + NADP(+) = (6R)-5,10-methenyltetrahydrofolate + NADPH. It carries out the reaction (6R)-5,10-methenyltetrahydrofolate + H2O = (6R)-10-formyltetrahydrofolate + H(+). The protein operates within one-carbon metabolism; tetrahydrofolate interconversion. Its function is as follows. Catalyzes the oxidation of 5,10-methylenetetrahydrofolate to 5,10-methenyltetrahydrofolate and then the hydrolysis of 5,10-methenyltetrahydrofolate to 10-formyltetrahydrofolate. This chain is Bifunctional protein FolD, found in Aliivibrio salmonicida (strain LFI1238) (Vibrio salmonicida (strain LFI1238)).